The chain runs to 205 residues: Cytochrome c biogenesis ATP-binding export protein CcmA 2 (205 aa).

The ABC transporter domain occupies 2-205 (LEARDLHCER…LALTGGEAGL (204 aa)). 34 to 41 (GGNGAGKT) contacts ATP.

This sequence belongs to the ABC transporter superfamily. CcmA exporter (TC 3.A.1.107) family. As to quaternary structure, the complex is composed of two ATP-binding proteins (CcmA) and two transmembrane proteins (CcmB).

It is found in the cell inner membrane. The enzyme catalyses heme b(in) + ATP + H2O = heme b(out) + ADP + phosphate + H(+). Functionally, part of the ABC transporter complex CcmAB involved in the biogenesis of c-type cytochromes; once thought to export heme, this seems not to be the case, but its exact role is uncertain. Responsible for energy coupling to the transport system. The chain is Cytochrome c biogenesis ATP-binding export protein CcmA 2 from Salmonella paratyphi A (strain ATCC 9150 / SARB42).